Consider the following 291-residue polypeptide: Alpha/beta-gliadin A-II (291 aa).

An N-terminal signal peptide occupies residues 1-20 (MKTFPILALLAIVATTATTA). Residues 32–55 (NPSQQQPQEQVPLVQEQQFQGQQQ) are compositionally biased toward low complexity. Disordered regions lie at residues 32–120 (NPSQ…QQQQ) and 227–250 (QQYP…GSFQ). 2 stretches are compositionally biased toward pro residues: residues 56-71 (PFPP…PFPS) and 81-104 (FPQP…PQPQ). 2 stretches are compositionally biased toward low complexity: residues 105-120 (PQYS…QQQQ) and 227-237 (QQYPSGQGFFQ). The segment covering 238 to 250 (PSQQNPQAQGSFQ) has biased composition (polar residues).

This sequence belongs to the gliadin/glutenin family. Post-translationally, substrate of transglutaminase.

Gliadin is the major seed storage protein in wheat. The polypeptide is Alpha/beta-gliadin A-II (Triticum aestivum (Wheat)).